An 855-amino-acid polypeptide reads, in one-letter code: Envelope glycoprotein gp160 (855 aa).

The signal sequence occupies residues Met1 to Asp31. Residues Asn32–Ile683 are Extracellular-facing. Cys53 and Cys73 are oxidised to a cystine. N-linked (GlcNAc...) asparagine; by host glycans are attached at residues Asn87, Asn129, Asn140, Asn145, Asn154, Asn158, Asn186, Asn189, Asn199, Asn236, Asn243, Asn264, Asn278, Asn291, and Asn297. Cystine bridges form between Cys118–Cys207, Cys125–Cys198, Cys130–Cys155, Cys220–Cys249, and Cys230–Cys241. A V1 region spans residues Cys130–Asn154. Residues Cys155–Cys198 are V2. The interval Cys298–His331 is V3. Cys298 and Cys332 are disulfide-bonded. 3 N-linked (GlcNAc...) asparagine; by host glycosylation sites follow: Asn333, Asn340, and Asn355. Positions Ser364–His374 are CD4-binding loop. 2 disulfides stabilise this stretch: Cys378–Cys444 and Cys385–Cys417. The interval Cys385–Cys417 is V4. Residues Asn386, Asn392, Asn398, Asn404, Asn443, Asn447, Asn460, Asn461, and Asn464 are each glycosylated (N-linked (GlcNAc...) asparagine; by host). V5 regions lie at residues Thr459–Gly470 and Ser462–Gly470. Residues Ala511–Ala531 are fusion peptide. Residues Lys573–Leu591 form an immunosuppression region. A disulfide bridge connects residues Cys597 and Cys603. N-linked (GlcNAc...) asparagine; by host glycosylation is found at Asn610, Asn615, Asn624, Asn636, and Asn673. Positions Arg632–Ala666 form a coiled coil. Positions Glu661–Lys682 are MPER; binding to GalCer. Residues Phe684–Val704 form a helical membrane-spanning segment. At Asn705–Leu855 the chain is on the cytoplasmic side. The short motif at Tyr711–Leu714 is the YXXL motif; contains endocytosis signal element. The S-palmitoyl cysteine; by host moiety is linked to residue Cys763. Positions Leu854–Leu855 match the Di-leucine internalization motif motif.

The protein belongs to the HIV-1 env protein family. The mature envelope protein (Env) consists of a homotrimer of non-covalently associated gp120-gp41 heterodimers. The resulting complex protrudes from the virus surface as a spike. There seems to be as few as 10 spikes on the average virion. Interacts with host CD4, CCR5 and CXCR4. Gp120 also interacts with the C-type lectins CD209/DC-SIGN and CLEC4M/DC-SIGNR (collectively referred to as DC-SIGN(R)). Gp120 and gp41 interact with GalCer. Gp120 interacts with host ITGA4/ITGB7 complex; on CD4+ T-cells, this interaction results in rapid activation of integrin ITGAL/LFA-1, which facilitates efficient cell-to-cell spreading of HIV-1. Gp120 interacts with cell-associated heparan sulfate; this interaction increases virus infectivity on permissive cells and may be involved in infection of CD4- cells. As to quaternary structure, the mature envelope protein (Env) consists of a homotrimer of non-covalently associated gp120-gp41 heterodimers. The resulting complex protrudes from the virus surface as a spike. There seems to be as few as 10 spikes on the average virion. In terms of processing, highly glycosylated by host. The high number of glycan on the protein is reffered to as 'glycan shield' because it contributes to hide protein sequence from adaptive immune system. Palmitoylation of the transmembrane protein and of Env polyprotein (prior to its proteolytic cleavage) is essential for their association with host cell membrane lipid rafts. Palmitoylation is therefore required for envelope trafficking to classical lipid rafts, but not for viral replication. Post-translationally, specific enzymatic cleavages in vivo yield mature proteins. Envelope glycoproteins are synthesized as an inactive precursor that is heavily N-glycosylated and processed likely by host cell furin in the Golgi to yield the mature SU and TM proteins. The cleavage site between SU and TM requires the minimal sequence [KR]-X-[KR]-R. About 2 of the 9 disulfide bonds of gp41 are reduced by P4HB/PDI, following binding to CD4 receptor.

The protein resides in the virion membrane. The protein localises to the host cell membrane. It is found in the host endosome membrane. Oligomerizes in the host endoplasmic reticulum into predominantly trimers. In a second time, gp160 transits in the host Golgi, where glycosylation is completed. The precursor is then proteolytically cleaved in the trans-Golgi and thereby activated by cellular furin or furin-like proteases to produce gp120 and gp41. Functionally, attaches the virus to the host lymphoid cell by binding to the primary receptor CD4. This interaction induces a structural rearrangement creating a high affinity binding site for a chemokine coreceptor like CXCR4 and/or CCR5. Acts as a ligand for CD209/DC-SIGN and CLEC4M/DC-SIGNR, which are respectively found on dendritic cells (DCs), and on endothelial cells of liver sinusoids and lymph node sinuses. These interactions allow capture of viral particles at mucosal surfaces by these cells and subsequent transmission to permissive cells. HIV subverts the migration properties of dendritic cells to gain access to CD4+ T-cells in lymph nodes. Virus transmission to permissive T-cells occurs either in trans (without DCs infection, through viral capture and transmission), or in cis (following DCs productive infection, through the usual CD4-gp120 interaction), thereby inducing a robust infection. In trans infection, bound virions remain infectious over days and it is proposed that they are not degraded, but protected in non-lysosomal acidic organelles within the DCs close to the cell membrane thus contributing to the viral infectious potential during DCs' migration from the periphery to the lymphoid tissues. On arrival at lymphoid tissues, intact virions recycle back to DCs' cell surface allowing virus transmission to CD4+ T-cells. Its function is as follows. Acts as a class I viral fusion protein. Under the current model, the protein has at least 3 conformational states: pre-fusion native state, pre-hairpin intermediate state, and post-fusion hairpin state. During fusion of viral and target intracellular membranes, the coiled coil regions (heptad repeats) assume a trimer-of-hairpins structure, positioning the fusion peptide in close proximity to the C-terminal region of the ectodomain. The formation of this structure appears to drive apposition and subsequent fusion of viral and target cell membranes. Complete fusion occurs in host cell endosomes and is dynamin-dependent, however some lipid transfer might occur at the plasma membrane. The virus undergoes clathrin-dependent internalization long before endosomal fusion, thus minimizing the surface exposure of conserved viral epitopes during fusion and reducing the efficacy of inhibitors targeting these epitopes. Membranes fusion leads to delivery of the nucleocapsid into the cytoplasm. The protein is Envelope glycoprotein gp160 of Homo sapiens (Human).